Consider the following 209-residue polypeptide: Thymidylate kinase (209 aa).

10–17 (GPEGAGKT) provides a ligand contact to ATP.

Belongs to the thymidylate kinase family.

It carries out the reaction dTMP + ATP = dTDP + ADP. Phosphorylation of dTMP to form dTDP in both de novo and salvage pathways of dTTP synthesis. The protein is Thymidylate kinase of Anoxybacillus flavithermus (strain DSM 21510 / WK1).